The chain runs to 250 residues: Glycerol-1-phosphate phosphohydrolase 2 (250 aa).

Aspartate 18 acts as the Nucleophile in catalysis. Positions 18 and 20 each coordinate Mg(2+). Catalysis depends on aspartate 20, which acts as the Proton donor. A Glycyl lysine isopeptide (Lys-Gly) (interchain with G-Cter in ubiquitin) cross-link involves residue lysine 64. Residue serine 90 is modified to Phosphoserine. A Glycyl lysine isopeptide (Lys-Gly) (interchain with G-Cter in ubiquitin) cross-link involves residue lysine 144. Aspartate 179 contributes to the Mg(2+) binding site.

Belongs to the HAD-like hydrolase superfamily. DOG/GPP family. Monomer. Mg(2+) serves as cofactor.

It localises to the cytoplasm. The protein localises to the nucleus. It carries out the reaction sn-glycerol 1-phosphate + H2O = glycerol + phosphate. The catalysed reaction is sn-glycerol 3-phosphate + H2O = glycerol + phosphate. Its function is as follows. Glycerol-1-phosphate phosphohydrolase involved in glycerol biosynthesis. Plays a role in osmoadaptation. This chain is Glycerol-1-phosphate phosphohydrolase 2, found in Saccharomyces cerevisiae (strain ATCC 204508 / S288c) (Baker's yeast).